The chain runs to 485 residues: Glutamyl-tRNA(Gln) amidotransferase subunit A (485 aa).

Catalysis depends on charge relay system residues lysine 78 and serine 153. Serine 177 (acyl-ester intermediate) is an active-site residue.

The protein belongs to the amidase family. GatA subfamily. Heterotrimer of A, B and C subunits.

It catalyses the reaction L-glutamyl-tRNA(Gln) + L-glutamine + ATP + H2O = L-glutaminyl-tRNA(Gln) + L-glutamate + ADP + phosphate + H(+). Its function is as follows. Allows the formation of correctly charged Gln-tRNA(Gln) through the transamidation of misacylated Glu-tRNA(Gln) in organisms which lack glutaminyl-tRNA synthetase. The reaction takes place in the presence of glutamine and ATP through an activated gamma-phospho-Glu-tRNA(Gln). The protein is Glutamyl-tRNA(Gln) amidotransferase subunit A of Bacillus cereus (strain AH820).